Reading from the N-terminus, the 661-residue chain is uncharacterized protein (661 aa).

A disordered region spans residues 25–52; that stretch reads LLPSEPPVGDMNNEDSDTNTSITQSPTN. Residues 42–52 show a composition bias toward polar residues; sequence TNTSITQSPTN. Positions 246–297 constitute an SANT domain; that stretch reads SMPDIWNEEQHSIFVQQFILHGKKFGKIAEAVPGKNSKECVLHYYLTKRTTD. Disordered regions lie at residues 306 to 329, 478 to 499, 548 to 570, and 604 to 633; these read TKTK…KSKG, YYEP…TRKE, PMKM…TFQL, and RIDE…PNSQ. Residues 308-328 are compositionally biased toward basic residues; that stretch reads TKGRRRKKLLPSQRGGKKKSK. Residues 478 to 487 are compositionally biased toward basic and acidic residues; the sequence is YYEPKLEQHS. Over residues 604–617 the composition is skewed to basic and acidic residues; the sequence is RIDELSVEDQEHTT.

The protein localises to the nucleus. This is an uncharacterized protein from Schizosaccharomyces pombe (strain 972 / ATCC 24843) (Fission yeast).